A 95-amino-acid polypeptide reads, in one-letter code: Small ribosomal subunit protein bS6 (95 aa).

It belongs to the bacterial ribosomal protein bS6 family.

Its function is as follows. Binds together with bS18 to 16S ribosomal RNA. The sequence is that of Small ribosomal subunit protein bS6 from Corynebacterium glutamicum (strain ATCC 13032 / DSM 20300 / JCM 1318 / BCRC 11384 / CCUG 27702 / LMG 3730 / NBRC 12168 / NCIMB 10025 / NRRL B-2784 / 534).